The following is a 71-amino-acid chain: MGVGLHGDHVGGELNSANAFTETLFKMDYNNPEHKEMMDLEGLKRWIARRKSLKLPSTRANIKISDKKLPH.

A signal peptide spans 1–21 (MGVGLHGDHVGGELNSANAFT).

This is an uncharacterized protein from Haemophilus influenzae (strain ATCC 51907 / DSM 11121 / KW20 / Rd).